We begin with the raw amino-acid sequence, 258 residues long: Trifolitoxin-processing protein TfxF (258 aa).

Functionally, the actions of the proteins TfxB, TfxD and TfxF are implicated in the processing of the inactive trifolitoxin (TfxA) precursor into the active peptide. This is Trifolitoxin-processing protein TfxF (tfxF) from Rhizobium leguminosarum bv. trifolii.